The sequence spans 450 residues: MTFTAFTMFLVFSTFSQSMMVNRTGTITIMFTTMLFFLSMDIVAMSPGMTLFNNWFNLTPYNLPLSFLMLSLIVMLLMYSTSNHRYDLKSPFYLLLLLTNMMGLLLFPLVNDLIALYVVMELQSYSLYLLTGLHSRSYNSSRASLLYFLMGGVASTIMLLASYFVYALTGTTNLSDMAMFYSYSNAFDYFDILLVALLFKMGMAPLHRWSIAVYNYAPTYITAYISMVAKMSMVSWIFANANLFHHHVTILFFYISLAMAAYKPLFQVNIKTMLAYSGMLNFSYILLSMMSYDPAFYIYMIQYVLTHLILFLGMLGASQYVNSPISIWSPLTFMHQLKLPNLTLAFSLILALFSLIGMPPTPGFYAKLFVLSAALQDNYVLETCAIVVCSVVATYYYANMIKVLFNSSTQKVTNFINPSLAFTMASATSLLFSFFMFMPSLSEGLYLITL.

13 helical membrane-spanning segments follow: residues 25–45, 58–78, 90–110, 113–133, 145–165, 186–206, 219–239, 248–268, 272–292, 295–315, 344–364, 385–405, and 414–436; these read GTITIMFTTMLFFLSMDIVAM, LTPYNLPLSFLMLSLIVMLLM, SPFYLLLLLTNMMGLLLFPLV, LIALYVVMELQSYSLYLLTGL, LLYFLMGGVASTIMLLASYFV, AFDYFDILLVALLFKMGMAPL, TYITAYISMVAKMSMVSWIFA, VTILFFYISLAMAAYKPLFQV, TMLAYSGMLNFSYILLSMMSY, AFYIYMIQYVLTHLILFLGML, LAFSLILALFSLIGMPPTPGF, AIVVCSVVATYYYANMIKVLF, and NFINPSLAFTMASATSLLFSFFM.

The protein belongs to the complex I subunit 2 family.

The protein localises to the mitochondrion inner membrane. The enzyme catalyses a ubiquinone + NADH + 5 H(+)(in) = a ubiquinol + NAD(+) + 4 H(+)(out). Core subunit of the mitochondrial membrane respiratory chain NADH dehydrogenase (Complex I) that is believed to belong to the minimal assembly required for catalysis. Complex I functions in the transfer of electrons from NADH to the respiratory chain. The immediate electron acceptor for the enzyme is believed to be ubiquinone. The polypeptide is NADH-ubiquinone oxidoreductase chain 2 (ND2) (Debaryomyces hansenii (strain ATCC 36239 / CBS 767 / BCRC 21394 / JCM 1990 / NBRC 0083 / IGC 2968) (Yeast)).